Reading from the N-terminus, the 432-residue chain is Glutamate--cysteine ligase EgtA (432 aa).

The protein belongs to the glutamate--cysteine ligase type 2 family. EgtA subfamily.

It catalyses the reaction L-cysteine + L-glutamate + ATP = gamma-L-glutamyl-L-cysteine + ADP + phosphate + H(+). Its pathway is amino-acid biosynthesis; ergothioneine biosynthesis. In terms of biological role, catalyzes the synthesis of gamma-glutamylcysteine (gamma-GC) which is used as substrate for the biosynthesis of the low-molecular thiol compound ergothioneine (ERG). ERG is one of the major redox buffers which protects bacteria against redox stressors and antibiotics; loss of ERG or mycothiol (MSH, the other major redox buffer in this bacteria) leads to respiratory alterations and bioenergetic deficiencies that negatively impact virulence. This Mycobacterium tuberculosis (strain CDC 1551 / Oshkosh) protein is Glutamate--cysteine ligase EgtA (egtA).